Reading from the N-terminus, the 102-residue chain is Small ribosomal subunit protein uS10 (102 aa).

The protein belongs to the universal ribosomal protein uS10 family. As to quaternary structure, part of the 30S ribosomal subunit.

Its function is as follows. Involved in the binding of tRNA to the ribosomes. This chain is Small ribosomal subunit protein uS10, found in Chlorobium phaeobacteroides (strain BS1).